The sequence spans 530 residues: Chaperone Ric-8A (530 aa).

Serine 435 bears the Phosphoserine mark. A phosphothreonine mark is found at threonine 440 and threonine 442. Serine 501, serine 522, serine 523, and serine 527 each carry phosphoserine.

This sequence belongs to the synembryn family. In terms of assembly, interacts with GDP-bound G alpha proteins GNAI1, GNAO1 and GNAQ, and with GNA13 with lower affinity. Does not interact with G-alpha proteins when they are in complex with subunits beta and gamma. Interacts (via C-terminus) with RGS14; the interaction stimulates the dissociation of the complex between RGS14 and the active GTP-bound form of GNAI1. Interacts with NCS1; interaction is favored in the absence of Ca(2+) and myristoylation of NCS1 is not required. Phosphorylated at Ser-435 and Thr-440 by CK2, stabilizing its interface with G alpha proteins.

It is found in the cytoplasm. The protein localises to the cell cortex. In terms of biological role, chaperone that specifically binds and folds nascent G alpha proteins prior to G protein heterotrimer formation, promoting their stability and activity: folds GNAI1, GNAO1, GNA13 and GNAQ. Does not fold G(s) G-alpha proteins GNAS nor GNAL. Also acts as a guanine nucleotide exchange factor (GEF) for G alpha proteins by stimulating exchange of bound GDP for free GTP. Involved in regulation of microtubule pulling forces during mitotic movement of chromosomes by stimulating G(i)-alpha protein (GNAI1), possibly leading to release G(i)-alpha-GTP and NuMA proteins from the NuMA-GPSM2-G(i)-alpha-GDP complex. Also acts as an activator for G(q)-alpha (GNAQ) protein by enhancing the G(q)-coupled receptor-mediated ERK activation. The sequence is that of Chaperone Ric-8A (RIC8A) from Macaca fascicularis (Crab-eating macaque).